The sequence spans 1347 residues: G-protein coupled receptor-associated sorting protein 1 (1347 aa).

Disordered regions lie at residues 1–75 (MTRA…AYAK), 145–174 (ESIP…SWYR), and 188–281 (DFKW…NSRS). The segment covering 21–33 (ENANAAEVEPEAP) has biased composition (low complexity). The segment covering 211–226 (FRPRKSMKANNRFRHM) has biased composition (basic residues). The span at 263–278 (PKDKTKVWSKPKEEPN) shows a compositional bias: basic and acidic residues. Phosphoserine is present on Ser-295. Disordered regions lie at residues 310-344 (GEEA…AMSG), 364-396 (FSKS…QEAR), and 460-485 (QVSS…SKSM). Residues 316-325 (RSKPRARKGV) are compositionally biased toward basic residues. The segment covering 370–396 (KKEPRTRAVPKEEVKTKARASTKQEAR) has biased composition (basic and acidic residues). Polar residues predominate over residues 461-484 (VSSFCLGSGKKSSMESGPKATSKS). Ser-619 and Ser-626 each carry phosphoserine. The residue at position 860 (Thr-860) is a Phosphothreonine. At Ser-862 the chain carries Phosphoserine.

The protein belongs to the GPRASP family. As to quaternary structure, interacts with cytoplasmic tails of a variety of G-protein coupled receptors such as delta opioid receptor/OPRD1, beta-2 adrenergic receptor/ADRB2 and D4 dopamine receptor/DRD4 as well as D2 dopamine receptor/DRD2. Interacts with PER1. Interacts with BECN2; the interaction is direct. In terms of tissue distribution, expressed in the brain, with higher expression in the hippocampus, hypothalamus and olfactory bulb.

The protein localises to the cytoplasm. Modulates lysosomal sorting and functional down-regulation of a variety of G-protein coupled receptors. Targets receptors for degradation in lysosomes via its interaction with BECN2. The polypeptide is G-protein coupled receptor-associated sorting protein 1 (Gprasp1) (Mus musculus (Mouse)).